The following is a 312-amino-acid chain: MIKKRLFIGSSSEELKTAEIVKEVLLKDFEVTIWNDNVWDTAVFKINQNFLADLLKASLQFDFGILIGTKDDKVMFREVEMIQPRDNVLFELGLFTGRLGTSKCAFLIDKEIKLPSDFNGLTLARFDSTNEATVIAGANSIKDLFLASADDEINFFPSATLASVYYENLIVPICRFIIDNNGFTKGDTHYQKCKLNIIVPERINQDVNLQFEKLKGLFTTENVSFKYSGRPRQISVDTQIKNDTLEFIDFPTIITGINHAISNLLPNDFNKQSPDYSSILDRELRRFITTLKKLLIRGGFDEMVNVKRDSEL.

In terms of domain architecture, TIR spans 5 to 127 (RLFIGSSSEE…FNGLTLARFD (123 aa)).

This sequence in the C-terminal section; belongs to the bacterial STING family. In terms of assembly, forms homodimers; in the presence of c-di-GMP forms filaments with an ordered array of parallel-stacked subunits.

The catalysed reaction is NAD(+) + H2O = ADP-D-ribose + nicotinamide + H(+). NAD(+) hydrolase activity is strongly stimulated by c-di-GMP, weakly by 3'3'-cGAMP, very weakly by c-di-AMP but not at all by 2'3'-cGAMP. Self-association of TIR domains is required for NADase activity. Its function is as follows. Effector protein of a CBASS antiviral system with NAD(+) hydrolase activity. CBASS (cyclic oligonucleotide-based antiphage signaling system) provides immunity against bacteriophage. The CD-NTase protein synthesizes cyclic nucleotides in response to infection; these serve as specific second messenger signals. The signals activate a diverse range of effectors, leading to bacterial cell death and thus abortive phage infection. A type I-D CBASS(GG) system. Binds c-di-GMP, does not bind cUMP-AMP. Upon activation by c-di-GMP forms filaments which hydrolyze NAD(+); filament formation is required for enzyme activation. This is CD-NTase-associated protein 12 from Niabella drilacis (strain DSM 25811 / CCM 8410 / CCUG 62505 / LMG 26954 / E90).